We begin with the raw amino-acid sequence, 199 residues long: Putative lectin L633 (199 aa).

A signal peptide spans 1–25 (MNILLLLMLLTSIILLVILIFLAYN). The segment covering 35-48 (CITPAPESQSISPD) has biased composition (polar residues). The tract at residues 35-74 (CITPAPESQSISPDQTTQLQTTTPVTSTPSNPTPTTIIPN) is disordered. Positions 49–73 (QTTQLQTTTPVTSTPSNPTPTTIIP) are enriched in low complexity. The Bulb-type lectin domain maps to 84–195 (EIVSNGDNVL…LGQELWCATR (112 aa)). N121 is a glycosylation site (N-linked (GlcNAc...) asparagine; by host).

The protein localises to the secreted. The polypeptide is Putative lectin L633 (Acanthamoeba polyphaga (Amoeba)).